Here is a 445-residue protein sequence, read N- to C-terminus: V-type proton ATPase subunit H (445 aa).

The protein belongs to the V-ATPase H subunit family. In terms of assembly, V-ATPase is a heteromultimeric enzyme composed of a peripheral catalytic V1 complex (components A to H) attached to an integral membrane V0 proton pore complex (components: a, c, c', c'' and d).

Subunit of the peripheral V1 complex of vacuolar ATPase. Subunit H activates the ATPase activity of the enzyme and couples ATPase activity to proton flow. Vacuolar ATPase is responsible for acidifying a variety of intracellular compartments in eukaryotic cells, thus providing most of the energy required for transport processes in the vacuolar system. This chain is V-type proton ATPase subunit H (vatH), found in Dictyostelium discoideum (Social amoeba).